The following is a 235-amino-acid chain: uncharacterized protein (235 aa).

This sequence belongs to the UreF family.

The protein resides in the cytoplasm. It is found in the nucleus. Probably facilitates nickel incorporation. This is an uncharacterized protein from Schizosaccharomyces pombe (strain 972 / ATCC 24843) (Fission yeast).